The sequence spans 518 residues: Branchpoint-bridging protein (518 aa).

Disordered regions lie at residues 1-47 (MSAY…KIGK), 94-124 (PSGN…SNTR), 202-241 (AIRG…SGND), and 295-314 (RETK…RPGL). Residues 19-31 (VRGRSEKKVEASH) show a composition bias toward basic and acidic residues. Residues 167-233 (YIPVKDYPDI…SNSSLSFSNP (67 aa)) enclose the KH domain. Over residues 225 to 240 (NSSLSFSNPNLNSSGN) the composition is skewed to low complexity. A CCHC-type zinc finger spans residues 319-336 (LVCKSCGKVGHFARDCKF). The segment at 337–518 (RGTSDGNNNP…TKNPPPPPPA (182 aa)) is disordered. Over residues 340-361 (SDGNNNPIVQDQADSYQQTAPY) the composition is skewed to polar residues. The segment covering 363–381 (DSRRQREEEDPRNNGREEI) has biased composition (basic and acidic residues). Residues 408 to 518 (DAPPPPVGLA…TKNPPPPPPA (111 aa)) show a composition bias toward pro residues.

The protein belongs to the BBP/SF1 family.

It is found in the nucleus. Necessary for the splicing of pre-mRNA. Has a role in the recognition of the branch site (5'-UACUAAC-3'), the pyrimidine tract and the 3'-splice site at the 3'-end of introns. The chain is Branchpoint-bridging protein (BBP) from Debaryomyces hansenii (strain ATCC 36239 / CBS 767 / BCRC 21394 / JCM 1990 / NBRC 0083 / IGC 2968) (Yeast).